A 229-amino-acid chain; its full sequence is Cytochrome c oxidase subunit 2 (229 aa).

Topologically, residues 1 to 14 are mitochondrial intermembrane; that stretch reads MAQQAQLGLQDAAS. A helical membrane pass occupies residues 15–45; sequence PIMEELIHFHDHTLTVVFLISVLIFYLIIVM. The Mitochondrial matrix segment spans residues 46–59; it reads VTTTFMNKHSLDSQ. The helical transmembrane segment at 60-87 threads the bilayer; sequence EVEIVWTVMPAIVLITIALPSLRILYLT. At 88-229 the chain is on the mitochondrial intermembrane side; the sequence is DEISNPHLTI…ENWTTKVLAS (142 aa). 6 residues coordinate Cu cation: His-161, Cys-196, Glu-198, Cys-200, His-204, and Met-207. Glu-198 contacts Mg(2+).

The protein belongs to the cytochrome c oxidase subunit 2 family. In terms of assembly, component of the cytochrome c oxidase (complex IV, CIV), a multisubunit enzyme composed of 14 subunits. The complex is composed of a catalytic core of 3 subunits MT-CO1, MT-CO2 and MT-CO3, encoded in the mitochondrial DNA, and 11 supernumerary subunits COX4I, COX5A, COX5B, COX6A, COX6B, COX6C, COX7A, COX7B, COX7C, COX8 and NDUFA4, which are encoded in the nuclear genome. The complex exists as a monomer or a dimer and forms supercomplexes (SCs) in the inner mitochondrial membrane with NADH-ubiquinone oxidoreductase (complex I, CI) and ubiquinol-cytochrome c oxidoreductase (cytochrome b-c1 complex, complex III, CIII), resulting in different assemblies (supercomplex SCI(1)III(2)IV(1) and megacomplex MCI(2)III(2)IV(2)). Found in a complex with TMEM177, COA6, COX18, COX20, SCO1 and SCO2. Interacts with TMEM177 in a COX20-dependent manner. Interacts with COX20. Interacts with COX16. It depends on Cu cation as a cofactor.

The protein localises to the mitochondrion inner membrane. The enzyme catalyses 4 Fe(II)-[cytochrome c] + O2 + 8 H(+)(in) = 4 Fe(III)-[cytochrome c] + 2 H2O + 4 H(+)(out). Component of the cytochrome c oxidase, the last enzyme in the mitochondrial electron transport chain which drives oxidative phosphorylation. The respiratory chain contains 3 multisubunit complexes succinate dehydrogenase (complex II, CII), ubiquinol-cytochrome c oxidoreductase (cytochrome b-c1 complex, complex III, CIII) and cytochrome c oxidase (complex IV, CIV), that cooperate to transfer electrons derived from NADH and succinate to molecular oxygen, creating an electrochemical gradient over the inner membrane that drives transmembrane transport and the ATP synthase. Cytochrome c oxidase is the component of the respiratory chain that catalyzes the reduction of oxygen to water. Electrons originating from reduced cytochrome c in the intermembrane space (IMS) are transferred via the dinuclear copper A center (CU(A)) of subunit 2 and heme A of subunit 1 to the active site in subunit 1, a binuclear center (BNC) formed by heme A3 and copper B (CU(B)). The BNC reduces molecular oxygen to 2 water molecules using 4 electrons from cytochrome c in the IMS and 4 protons from the mitochondrial matrix. In Petromyzon marinus (Sea lamprey), this protein is Cytochrome c oxidase subunit 2 (MT-CO2).